The primary structure comprises 94 residues: Evasin P1104 (94 aa).

A signal peptide spans M1–A28. 3 disulfides stabilise this stretch: C48-C66, C52-C68, and C62-C79. An N-linked (GlcNAc...) asparagine glycan is attached at N51.

It localises to the secreted. Functionally, salivary chemokine-binding protein which binds to host chemokines CXCL1, CXCL2, CXCL3, CXCL5, CXCL6, CXCL12 and CXCL13. The protein is Evasin P1104 of Ixodes ricinus (Common tick).